A 1418-amino-acid chain; its full sequence is Alpha-latrotoxin-Lhe1a (1418 aa).

A signal peptide spans 1 to 20 (MIFVGETMERANHSLVRLRR). The interval 17–20 (RLRR) is furin-like endopeptidase recognition region. The interval 238-257 (VLYALLYGTQTYISVMFFLL) is helix H8 is the probable transmembrane region of the tetrameric pore inserted in the target cell membrane. Cys-413 and Cys-1066 form a disulfide bridge. 22 ANK repeats span residues 458-489 (LYNA…ATFD), 490-521 (QGRT…ELNQ), 525-554 (KGYT…SINS), 559-589 (FLQT…NINE), 593-622 (DGFT…DVNA), 626-656 (KGLT…DINA), 660-690 (NNMT…NANV), 695-723 (GLLS…NVNV), 729-758 (GGIT…NIEQ), 762-791 (EKYT…NFEA), 795-824 (SGAT…NWRD), 828-857 (NGQM…TVLD), 862-891 (NSDT…DINT), 895-924 (NGHA…NVYI), 928-957 (NGMN…KFEW), 971-1003 (EECA…GNFN), 1004-1033 (ICGP…SVDG), 1035-1064 (KTDT…KVNH), 1068-1097 (NGMT…DFRR), 1101-1131 (RGAT…DINI), 1137-1166 (DKET…DVTI), and 1170-1199 (YDKT…KFRR). A 4C4.1 epitope region spans residues 1026 to 1032 (EEVLSVD). The interval 1196–1199 (KFRR) is furin-like endopeptidase recognition region. The propeptide occupies 1200–1418 (EYKSSYGEHS…SEKKIQKISI (219 aa)).

This sequence belongs to the cationic peptide 01 (latrotoxin) family. 03 (alpha-latrotoxin) subfamily. As to quaternary structure, homotetramer in membranes. In terms of processing, processed by furin-like proteases at both the N- and C-termini. In terms of tissue distribution, expressed in venom gland, cephalothorax, and abdomen tissues from both males and females.

The protein localises to the secreted. It is found in the target cell membrane. Its function is as follows. Presynaptic neurotoxin that causes massive release of neurotransmitters from vertebrate (but not invertebrate) nerve terminals and endocrine cells via a complex mechanism involving activation of receptor(s) and toxin insertion into the plasma membrane with subsequent pore formation. Binds to neurexin-1-alpha (NRXN1) in a calcium dependent manner, adhesion G protein-coupled receptor L1 (ADGRL1, also termed latrophilin-1 and calcium-independent receptor of latrotoxin (CIRL)), and receptor-type tyrosine-protein phosphatase S (PTPRS), also termed PTP sigma. NRXN1 and PTPRS are suggested to provide a platform for binding and subsequent pore formation events. In contrast, binding to ADGRL1 does not involve oligomerization and channel formation, but direct downstream stimulation of the synaptic fusion machinery. This Latrodectus hesperus (Western black widow spider) protein is Alpha-latrotoxin-Lhe1a.